The following is a 214-amino-acid chain: Endosomal/vacuolar adapter protein YPT35 (214 aa).

The segment at 1-63 is disordered; that stretch reads MNDKISFLPP…ATITRTRPRR (63 aa). The short motif at 5–15 is the PxP element; that stretch reads ISFLPPEPIQL. Over residues 16-31 the composition is skewed to acidic residues; that stretch reads LDEDSTEPELDIDSQQ. Positions 38-58 are enriched in low complexity; the sequence is SASNSNDSTSHSNDCGATITR. S65 and S66 each carry phosphoserine. The 141-residue stretch at 73-213 folds into the PX domain; the sequence is FQKAHVSDCT…IQFLEPSKRV (141 aa).

This sequence belongs to the YPT35 family. Interacts with RBD2, YIF1, YIP1 and YIP4.

It is found in the endosome membrane. The protein resides in the vacuole membrane. Functionally, recruits the lipid transfer protein VPS13 to endosomal and vacuolar membranes. In Saccharomyces cerevisiae (strain YJM789) (Baker's yeast), this protein is Endosomal/vacuolar adapter protein YPT35 (YPT35).